A 211-amino-acid polypeptide reads, in one-letter code: Large ribosomal subunit protein bL25 (211 aa).

Disordered regions lie at residues 1-23 and 191-211; these read MAGE…AARQ and LRSA…AEEV. Over residues 196-211 the composition is skewed to acidic residues; sequence NEADEEETEEATAEEV.

Belongs to the bacterial ribosomal protein bL25 family. CTC subfamily. As to quaternary structure, part of the 50S ribosomal subunit; part of the 5S rRNA/L5/L18/L25 subcomplex. Contacts the 5S rRNA. Binds to the 5S rRNA independently of L5 and L18.

In terms of biological role, this is one of the proteins that binds to the 5S RNA in the ribosome where it forms part of the central protuberance. The protein is Large ribosomal subunit protein bL25 of Dinoroseobacter shibae (strain DSM 16493 / NCIMB 14021 / DFL 12).